The following is a 214-amino-acid chain: Heat shock 70 kDa protein cognate 1 (214 aa).

It belongs to the heat shock protein 70 family.

The chain is Heat shock 70 kDa protein cognate 1 (Hsc70-1) from Drosophila simulans (Fruit fly).